A 91-amino-acid polypeptide reads, in one-letter code: Small ribosomal subunit protein uS19 (91 aa).

It belongs to the universal ribosomal protein uS19 family.

Protein S19 forms a complex with S13 that binds strongly to the 16S ribosomal RNA. This Marinobacter nauticus (strain ATCC 700491 / DSM 11845 / VT8) (Marinobacter aquaeolei) protein is Small ribosomal subunit protein uS19.